A 224-amino-acid polypeptide reads, in one-letter code: Response regulator protein GraR (224 aa).

Residues Q2–Y115 enclose the Response regulatory domain. At D51 the chain carries 4-aspartylphosphate. The segment at residues K126 to E224 is a DNA-binding region (ompR/PhoB-type). A phosphothreonine mark is found at T128, T130, and T149.

As to quaternary structure, interacts with GraX. In terms of processing, phosphorylated by GraS. Phosphorylated by Stk1; phosphorylation increases the DNA-binding activity of GraR.

It localises to the cytoplasm. Member of the two-component regulatory system GraR/GraS involved in resistance against cationic antimicrobial peptides (CAMPs). Upon phosphorylation by GraS, functions as a transcription regulator by direct binding to promoter regions of target genes such as adhesins, exoproteins, transporters, toxins, and proteins involved in cell wall synthesis. Down-regulates the expression of many genes involved in RNA and amino acid synthesis or glycolysis. The chain is Response regulator protein GraR (graR) from Staphylococcus aureus (strain USA300).